The sequence spans 318 residues: Homeobox protein Nkx-2.5 (318 aa).

The homeobox DNA-binding region spans 137–196; that stretch reads RRKPRVLFSQAQVYELERRFKQQRYLSAPERDQLASVLKLTSTQVKIWFQNRRYKCKRQR.

The protein belongs to the NK-2 homeobox family. In terms of assembly, homodimer (via the homeobox); binds DNA as homodimer. Interacts (via the homeobox) with TBX5 (via the T-box); this complex binds DNA. Interacts with HIPK1 and HIPK2, but not HIPK3. Interacts with the C-terminal zinc finger of GATA4 through its homeobox domain. Also interacts with JARID2 which represses its ability to activate transcription of ANF. Interacts with FBLIM1. Interacts with TBX18. Interacts with histone methyltransferase NSD2 (via HMG box). Interacts with NEDD9. Interacts with TBX1. Predominantly in the adult and embryonic heart, and to a lesser extent in lingual muscle, spleen and stomach.

It localises to the nucleus. Transcription factor required for the development of the heart and the spleen. During heart development, acts as a transcriptional activator of NPPA/ANF in cooperation with GATA4. May cooperate with TBX2 to negatively modulate expression of NPPA/ANF in the atrioventricular canal. Binds to the core DNA motif of NPPA promoter. Together with PBX1, required for spleen development through a mechanism that involves CDKN2B repression. Positively regulates transcription of genes such as COL3A1 and MMP2, resulting in increased pulmonary endothelial fibrosis in response to hypoxia. This is Homeobox protein Nkx-2.5 (Nkx2-5) from Mus musculus (Mouse).